Reading from the N-terminus, the 459-residue chain is Vitronectin (459 aa).

Residues M1–A19 form the signal peptide. Residues D20–T63 enclose the SMB domain. 7 disulfide bridges follow: C24–C28, C24–C40, C28–C58, C38–C40, C38–C51, C44–C50, and C51–C58. Residues R64 to D66 carry the Cell attachment site motif. 3 positions are modified to sulfotyrosine: Y75, Y78, and Y80. Residues N87 and N146 are each glycosylated (N-linked (GlcNAc...) asparagine). Hemopexin repeat units lie at residues G135–I179, K180–I227, and P228–M285. 2 positions are modified to phosphoserine: S289 and S378. Residues L338–S380 form a disordered region. Residues K347–S378 are compositionally biased toward basic residues. A sulfotyrosine mark is found at Y398 and Y401. A Hemopexin 4 repeat occupies D400–C453.

In terms of assembly, monomer. Interacts with SERPINE1/PAI1 and C1QBP. Post-translationally, sulfated on tyrosine residues. N- and O-glycosylated. In terms of processing, it has been suggested that the active SMB domain may be permitted considerable disulfide bond heterogeneity or variability, thus two alternate disulfide patterns based on 3D structures are described with 1 disulfide bond conserved in both. As to expression, plasma.

Its subcellular location is the secreted. It is found in the extracellular space. Functionally, vitronectin is a cell adhesion and spreading factor found in serum and tissues. Vitronectin interact with glycosaminoglycans and proteoglycans. Is recognized by certain members of the integrin family and serves as a cell-to-substrate adhesion molecule. Inhibitor of the membrane-damaging effect of the terminal cytolytic complement pathway. In Sus scrofa (Pig), this protein is Vitronectin (VTN).